The following is a 370-amino-acid chain: Phosphate-binding protein PstS 3 (370 aa).

Residues 1 to 22 (MKLNRFGAAVGVLAAGALVLSA) form the signal peptide. A lipid anchor (N-palmitoyl cysteine) is attached at Cys23. Cys23 is lipidated: S-diacylglycerol cysteine. Residues 56-58 (STA), Ser86, Asp104, and 191-193 (SGT) each bind phosphate.

The protein belongs to the PstS family. The complex is composed of two ATP-binding proteins (PstB), two transmembrane proteins (PstC and PstA) and a solute-binding protein (PstS).

The protein resides in the cell membrane. Part of the ABC transporter complex PstSACB involved in phosphate import. The chain is Phosphate-binding protein PstS 3 (pstS3) from Mycobacterium bovis (strain ATCC BAA-935 / AF2122/97).